The sequence spans 689 residues: Glycine--tRNA ligase beta subunit (689 aa).

This sequence belongs to the class-II aminoacyl-tRNA synthetase family. Tetramer of two alpha and two beta subunits.

Its subcellular location is the cytoplasm. The catalysed reaction is tRNA(Gly) + glycine + ATP = glycyl-tRNA(Gly) + AMP + diphosphate. This is Glycine--tRNA ligase beta subunit from Salmonella typhi.